The following is a 906-amino-acid chain: Protein translocase subunit SecA (906 aa).

ATP contacts are provided by residues Q89, 107–111 (GEGKT), and D501. Positions 891, 893, 902, and 903 each coordinate Zn(2+).

This sequence belongs to the SecA family. As to quaternary structure, monomer and homodimer. Part of the essential Sec protein translocation apparatus which comprises SecA, SecYEG and auxiliary proteins SecDF-YajC and YidC. The cofactor is Zn(2+).

Its subcellular location is the cell inner membrane. It localises to the cytoplasm. The catalysed reaction is ATP + H2O + cellular proteinSide 1 = ADP + phosphate + cellular proteinSide 2.. Its function is as follows. Part of the Sec protein translocase complex. Interacts with the SecYEG preprotein conducting channel. Has a central role in coupling the hydrolysis of ATP to the transfer of proteins into and across the cell membrane, serving both as a receptor for the preprotein-SecB complex and as an ATP-driven molecular motor driving the stepwise translocation of polypeptide chains across the membrane. This Parvibaculum lavamentivorans (strain DS-1 / DSM 13023 / NCIMB 13966) protein is Protein translocase subunit SecA.